We begin with the raw amino-acid sequence, 448 residues long: Protein Z-dependent protease inhibitor (448 aa).

The signal sequence occupies residues 1-21; sequence MRVASSLFLPVLLTEVWLVTS. The segment at 33-70 is disordered; that stretch reads VHLESQDYENQTWEEYTRTDPREEEEEEEEKEEGKDEE. The span at 54-63 shows a compositional bias: acidic residues; the sequence is REEEEEEEEK. N81 carries an N-linked (GlcNAc...) asparagine glycan. The heparin-binding stretch occupies residues 140-157; the sequence is AGPLILPALFKKVKETFS. Residues N184, N278, and N299 are each glycosylated (N-linked (GlcNAc...) asparagine).

It belongs to the serpin family. Post-translationally, phosphorylated by FAM20C in the extracellular medium. In terms of tissue distribution, detectable in liver, but not in heart, brain, spleen, lung, kidney, skeletal muscle or testes.

The protein localises to the secreted. Functionally, inhibits activity of the coagulation protease factor Xa in the presence of PROZ, calcium and phospholipids. Also inhibits factor XIa in the absence of cofactors. The protein is Protein Z-dependent protease inhibitor (Serpina10) of Mus musculus (Mouse).